The sequence spans 142 residues: MRLLGLDIGSKTVGVSVSDELGITAQKLETIKIDETKYNFGMRPLKKLVRQYEVDGFVLGLPKNMDGTSGASVARSKAYGKRLEEKFGLPVHYSDERLTTIESRRVLVEDAGIHDRKKRKQVIDQMAAVLILQNYLDLHRKD.

It belongs to the YqgF nuclease family.

Its subcellular location is the cytoplasm. In terms of biological role, could be a nuclease involved in processing of the 5'-end of pre-16S rRNA. The protein is Putative pre-16S rRNA nuclease of Lactobacillus helveticus (strain DPC 4571).